A 484-amino-acid polypeptide reads, in one-letter code: Sodium/pantothenate symporter (484 aa).

13 helical membrane-spanning segments follow: residues 3–23 (LGIILPLIIYLTFVFGAAIFA), 45–65 (GFVLAMTTASTYASASSFVGG), 74–94 (LGWVLLAMIQVPVVWLALGAL), 124–144 (VWLSSLALLLAFFAAMTVQFI), 162–182 (LLLFALTVGIYTFIGGFRAVV), 190–210 (TVMIFGTIILLIGTIYALGGV), 238–258 (FMASFWILVCFGVVGLPHTAV), 273–293 (MLIGTIVLSIIMLGMHLAGAL), 307–327 (VIPTLMIKVLPPIVAGIFLAA), 366–386 (VSYFSSIITLILTALLIFAAL), 397–417 (LFAFGGLEAAFLWVIVLGIYW), 424–444 (GALSSMIIGLGSYILLTQLGI), and 446–466 (LFNFHQIVPSLVFGLIAFLVG).

This sequence belongs to the sodium:solute symporter (SSF) (TC 2.A.21) family.

It is found in the cell inner membrane. It catalyses the reaction (R)-pantothenate(in) + Na(+)(in) = (R)-pantothenate(out) + Na(+)(out). Catalyzes the sodium-dependent uptake of extracellular pantothenate. This Haemophilus influenzae (strain ATCC 51907 / DSM 11121 / KW20 / Rd) protein is Sodium/pantothenate symporter (panF).